Here is a 122-residue protein sequence, read N- to C-terminus: Small ribosomal subunit protein uS13 (122 aa).

The disordered stretch occupies residues histidine 92–lysine 122. The span at glutamine 101 to lysine 122 shows a compositional bias: basic residues.

This sequence belongs to the universal ribosomal protein uS13 family. Part of the 30S ribosomal subunit. Forms a loose heterodimer with protein S19. Forms two bridges to the 50S subunit in the 70S ribosome.

Functionally, located at the top of the head of the 30S subunit, it contacts several helices of the 16S rRNA. In the 70S ribosome it contacts the 23S rRNA (bridge B1a) and protein L5 of the 50S subunit (bridge B1b), connecting the 2 subunits; these bridges are implicated in subunit movement. Contacts the tRNAs in the A and P-sites. The sequence is that of Small ribosomal subunit protein uS13 from Erythrobacter litoralis (strain HTCC2594).